The following is a 356-amino-acid chain: Nicotinate-nucleotide--dimethylbenzimidazole phosphoribosyltransferase (356 aa).

The active-site Proton acceptor is the glutamate 317.

The protein belongs to the CobT family. Homodimer.

The enzyme catalyses 5,6-dimethylbenzimidazole + nicotinate beta-D-ribonucleotide = alpha-ribazole 5'-phosphate + nicotinate + H(+). It functions in the pathway nucleoside biosynthesis; alpha-ribazole biosynthesis; alpha-ribazole from 5,6-dimethylbenzimidazole: step 1/2. Its function is as follows. Catalyzes the synthesis of alpha-ribazole-5'-phosphate from nicotinate mononucleotide (NAMN) and 5,6-dimethylbenzimidazole (DMB). In Salmonella dublin (strain CT_02021853), this protein is Nicotinate-nucleotide--dimethylbenzimidazole phosphoribosyltransferase.